The chain runs to 407 residues: MANKPVKKVVLAYSGGLDTSIILKWLQTEYGAEVVTFTADLGQGEEIEPARAKALAAGVKPENIFIEDVREEFVRDYVFPMFRANTVYEGQYLLGTSIARPLIAKKQIEIARKVGADAVSHGATGKGNDQVRFELGYYALEPDIHVIAPWREWDFKSREALLDFAEKHQIQIAKDKRGEAPFSVDANLLHSSSEGKVLEDPAVEAPEFVHMRTIAPEDAPDKPHIFTLDFERGDAVAIDGVAMSPATILTKLNELGHDNGVGRLDLVENRFVGMKSRGVYETPGGTILLAAHRGIESITLDRGSMHLKDELMPKYASLVYNGFWFSPEREMLQAAIDYSQAKVAGQVRVKLYKGNVSIIGRTSPYSLYDQDLVTFEEGKVAYDHRDAGGFIKLNALRLRVLAKRDKR.

ATP-binding positions include 12–20 and Ala-39; that span reads AYSGGLDTS. Residues Tyr-92 and Ser-97 each contribute to the L-citrulline site. Gly-122 is a binding site for ATP. Residues Thr-124, Asn-128, and Asp-129 each coordinate L-aspartate. Residue Asn-128 coordinates L-citrulline. The L-citrulline site is built by Arg-132, Ser-183, Ser-192, Glu-268, and Tyr-280.

It belongs to the argininosuccinate synthase family. Type 1 subfamily. Homotetramer.

It is found in the cytoplasm. It carries out the reaction L-citrulline + L-aspartate + ATP = 2-(N(omega)-L-arginino)succinate + AMP + diphosphate + H(+). It functions in the pathway amino-acid biosynthesis; L-arginine biosynthesis; L-arginine from L-ornithine and carbamoyl phosphate: step 2/3. The polypeptide is Argininosuccinate synthase (Caulobacter sp. (strain K31)).